The chain runs to 480 residues: 2-phosphoxylose phosphatase 1 (480 aa).

The Cytoplasmic segment spans residues 1-6 (MLFRNR). A helical; Signal-anchor for type II membrane protein transmembrane segment spans residues 7–27 (FLLLLALAALLAFVSLSLQFF). Topologically, residues 28 to 480 (HLIPVSTPKN…YYDACHREGF (453 aa)) are lumenal. The active-site Nucleophile is the H97. Residues N305 and N354 are each glycosylated (N-linked (GlcNAc...) asparagine). The active-site Proton donor is the D379.

Belongs to the histidine acid phosphatase family. In terms of assembly, interacts with B3GAT3; the interaction increases the 2-phosphoxylose phosphatase activity of PXYLP1 during completion of linkage region formation in a B3GAT3-mediated manner. Widely expressed. Strongly expressed in spleen, fetal liver, moderately in placenta, pancreas, kidney, thymus and colon.

The protein localises to the golgi apparatus membrane. It catalyses the reaction 3-O-[beta-D-GlcA-(1-&gt;3)-beta-D-Gal-(1-&gt;3)-beta-D-Gal-(1-&gt;4)-beta-D-2-O-P-Xyl]-L-seryl-[protein] + H2O = 3-O-(beta-D-GlcA-(1-&gt;3)-beta-D-Gal-(1-&gt;3)-beta-D-Gal-(1-&gt;4)-beta-D-Xyl)-L-seryl-[protein] + phosphate. Responsible for the 2-O-dephosphorylation of xylose in the glycosaminoglycan-protein linkage region of proteoglycans thereby regulating the amount of mature glycosaminoglycan (GAG) chains. Sulfated glycosaminoglycans (GAGs), including heparan sulfate and chondroitin sulfate, are synthesized on the so-called common GAG-protein linkage region (GlcUAbeta1-3Galbeta1-3Galbeta1-4Xylbeta1-O-Ser) of core proteins, which is formed by the stepwise addition of monosaccharide residues by the respective specific glycosyltransferases. Xylose 2-O-dephosphorylation during completion of linkage region formation is a prerequisite for the initiation and efficient elongation of the repeating disaccharide region of GAG chains. The sequence is that of 2-phosphoxylose phosphatase 1 from Homo sapiens (Human).